The chain runs to 328 residues: Cytochrome c biogenesis protein CcsA (328 aa).

8 helical membrane passes run 13–33, 46–66, 73–93, 101–121, 146–166, 234–254, 263–283, and 295–315; these read ISFSVVSIVLTIYFLTLLVNL, GIIITFFGITGLLFTRWIYSG, LYESLIFLSWAFSIIHMVSYF, LNAITAPSAIFIQGFATSGLL, MILGYGALLCGSLLSIALLVI, IISLGFIFLTVGILSGAVWAN, WDPKETWAFITWTIFAIYLHI, and AIVASIGFLLIWICYFGVILL.

It belongs to the CcmF/CycK/Ccl1/NrfE/CcsA family. As to quaternary structure, may interact with Ccs1.

It localises to the plastid. The protein localises to the chloroplast thylakoid membrane. Required during biogenesis of c-type cytochromes (cytochrome c6 and cytochrome f) at the step of heme attachment. The protein is Cytochrome c biogenesis protein CcsA of Crucihimalaya wallichii (Rock-cress).